We begin with the raw amino-acid sequence, 116 residues long: uncharacterized protein (116 aa).

The segment at 64-116 (RRFYSGTVNRNARSAGAASRSTSSVKRPLESKKRNARPETEKWCASYSAGNRR) is disordered. The span at 73–87 (RNARSAGAASRSTSS) shows a compositional bias: low complexity. A compositionally biased stretch (basic and acidic residues) spans 90 to 105 (RPLESKKRNARPETEK).

This is an uncharacterized protein from Saccharomyces cerevisiae (strain ATCC 204508 / S288c) (Baker's yeast).